Consider the following 653-residue polypeptide: Choline transporter-like protein 3 (653 aa).

Residues 34–54 (WLFLFFLFWTGLVFIMGYSVV) form a helical membrane-spanning segment. N-linked (GlcNAc...) asparagine glycans are attached at residues asparagine 136 and asparagine 151. 5 helical membrane-spanning segments follow: residues 213–233 (DTILGLCILALALSLAMMFTF), 243–263 (IFISLVILGLLFVCGVLWWLY), 284–304 (VLGFAIVSTGITAVLLVLIFV), 334–354 (LWTFAILIFFWVLWVAVLLSL), and 384–404 (LIGLIWTSEFILACQQMTIAG). N-linked (GlcNAc...) asparagine glycosylation is found at asparagine 412, asparagine 503, and asparagine 521. 2 consecutive transmembrane segments (helical) span residues 534-554 (FIIFLGKVLVVCFTVFGGLMA) and 563-583 (VWAVPLLLVAFFAYLVAHSFL). Residues 632 to 653 (RAQQDKHSLRNEEGTELQAIVR) are disordered. Positions 634-644 (QQDKHSLRNEE) are enriched in basic and acidic residues.

The protein belongs to the CTL (choline transporter-like) family.

Its subcellular location is the membrane. This is Choline transporter-like protein 3 (SLC44A3) from Homo sapiens (Human).